Reading from the N-terminus, the 288-residue chain is Probable ketoamine kinase VC_1539 (288 aa).

Residue 92 to 94 (NYL) participates in ATP binding. Residue aspartate 195 is the Proton acceptor of the active site.

This sequence belongs to the fructosamine kinase family.

Ketoamine kinase that phosphorylates ketoamines on the third carbon of the sugar moiety to generate ketoamine 3-phosphate. In Vibrio cholerae serotype O1 (strain ATCC 39315 / El Tor Inaba N16961), this protein is Probable ketoamine kinase VC_1539.